We begin with the raw amino-acid sequence, 57 residues long: uncharacterized protein (57 aa).

Transmembrane regions (helical) follow at residues 4-26 and 33-55; these read VNIL…SELW and ALGY…IAIL.

It localises to the cell membrane. This is an uncharacterized protein from Methanocaldococcus jannaschii (strain ATCC 43067 / DSM 2661 / JAL-1 / JCM 10045 / NBRC 100440) (Methanococcus jannaschii).